A 652-amino-acid chain; its full sequence is MSEKIYPVPTDIKKNALINEETYQKWYRESINDPEAFWAKHGQRIEWFKPYTKVKNTSFNGDVSIQWYEDGITNVAYNCIDRHLKNSGNHIALIWEGNNPYHDKKITYNELYEHVCRFANILKNHGVKKGDRVTIYLPMIPEAAYAMLACARIGAIHSVIFAGFSSEAIADRIVDCKSTFIITADQGLRGGKLIKLKNNIDHAIDIAARRGVHVNQVLVIRRTSGTIDWVKGRDFWYHEEISHAKTDCPAEMMNAEDPLFILYTSGSTGKPKGVLHTTAGYLVYVSMTHQYVFDYHPGEIYWCTADIGWISGHSYLIYGPLCNGATTLMFEGIPTFPDQGRFWEIVDKHKVNTLYTAPTAIRALMGAGNSFVEHSKRTSLRLLGTVGEPINPEAWKWFYHTVGDNRCPILDTWWQTETGGHMITPLPGATQLKAGSATHPFFGVQLQIIDGEGNVLEGEAEGNLCIIDSWPGQMRTLYNDHERFIETYFSTYKGKYFTGDGCKRDNDGYYWITGRIDDILNVSGHRLGTAEIESALVSHPAISEAAVVGYPHPIKGQGIYSFVTLMEGITPSEELYKDLIQHVKKEIGSIALLDKIQFTPQLPKTRSGKIMRRILRKIAENDFDNLGDISTLAEPQVVDDLIANRQNTEATA.

Residues 189–192 and S311 contribute to the CoA site; that span reads RGGK. ATP-binding positions include 387 to 389, 411 to 416, D500, and R515; these read GEP and DTWWQT. S523 contributes to the CoA binding site. ATP is bound at residue R526. Positions 537, 539, and 542 each coordinate Mg(2+). K584 serves as a coordination point for CoA. The residue at position 609 (K609) is an N6-acetyllysine.

Belongs to the ATP-dependent AMP-binding enzyme family. Requires Mg(2+) as cofactor. Acetylated. Deacetylation by the SIR2-homolog deacetylase activates the enzyme.

It catalyses the reaction acetate + ATP + CoA = acetyl-CoA + AMP + diphosphate. In terms of biological role, catalyzes the conversion of acetate into acetyl-CoA (AcCoA), an essential intermediate at the junction of anabolic and catabolic pathways. AcsA undergoes a two-step reaction. In the first half reaction, AcsA combines acetate with ATP to form acetyl-adenylate (AcAMP) intermediate. In the second half reaction, it can then transfer the acetyl group from AcAMP to the sulfhydryl group of CoA, forming the product AcCoA. The chain is Acetyl-coenzyme A synthetase from Bartonella quintana (strain Toulouse) (Rochalimaea quintana).